Here is a 607-residue protein sequence, read N- to C-terminus: Thymidine kinase (607 aa).

2 disordered regions span residues 1 to 160 and 180 to 215; these read MAGF…ADST and DDKS…PSGL. Residues 17–32 show a composition bias toward basic and acidic residues; it reads KCQEDESPENERHENF. 3 stretches are compositionally biased toward polar residues: residues 88–106, 148–160, and 194–203; these read AAVT…TSCP, RKTS…ADST, and RRPSSHSALK. Residue 291 to 298 participates in ATP binding; it reads GAPGVGKT. The active-site Proton acceptor is glutamate 317. A substrate-binding site is contributed by glutamine 355. Arginine 445 contributes to the ATP binding site. Arginine 451 contributes to the substrate binding site.

It belongs to the herpesviridae thymidine kinase family. As to quaternary structure, homodimer.

The protein resides in the virion tegument. It localises to the host nucleus. The catalysed reaction is thymidine + ATP = dTMP + ADP + H(+). Functionally, catalyzes the transfer of the gamma-phospho group of ATP to thymidine to generate dTMP in the salvage pathway of pyrimidine synthesis. The dTMP serves as a substrate for DNA polymerase during viral DNA replication. Allows the virus to be reactivated and to grow in non-proliferative cells lacking a high concentration of phosphorylated nucleic acid precursors. The chain is Thymidine kinase from Epstein-Barr virus (strain AG876) (HHV-4).